A 434-amino-acid chain; its full sequence is Enolase (434 aa).

Q165 is a binding site for (2R)-2-phosphoglycerate. The active-site Proton donor is E207. 3 residues coordinate Mg(2+): D244, E291, and D318. Residues K343, R372, S373, and K394 each coordinate (2R)-2-phosphoglycerate. K343 functions as the Proton acceptor in the catalytic mechanism.

The protein belongs to the enolase family. Requires Mg(2+) as cofactor.

The protein localises to the cytoplasm. It localises to the secreted. The protein resides in the cell surface. The catalysed reaction is (2R)-2-phosphoglycerate = phosphoenolpyruvate + H2O. The protein operates within carbohydrate degradation; glycolysis; pyruvate from D-glyceraldehyde 3-phosphate: step 4/5. In terms of biological role, catalyzes the reversible conversion of 2-phosphoglycerate (2-PG) into phosphoenolpyruvate (PEP). It is essential for the degradation of carbohydrates via glycolysis. The protein is Enolase of Staphylococcus epidermidis (strain ATCC 35984 / DSM 28319 / BCRC 17069 / CCUG 31568 / BM 3577 / RP62A).